The sequence spans 304 residues: Myelin basic protein (304 aa).

Basic and acidic residues-rich tracts occupy residues 1 to 12 (MGNHAGKRELNA) and 22 to 32 (NRGESEKKRNL). The interval 1–146 (MGNHAGKREL…QKRPSQRHGS (146 aa)) is disordered. N-acetylalanine is present on G2. Residues 51 to 65 (ANQNNGTSSQDTAVT) show a composition bias toward polar residues. Positions 95 to 113 (FSRDAPGREDNTFKDRPSE) are enriched in basic and acidic residues. Phosphoserine is present on S96. Residues 117–130 (LQTIQEDSAATSES) show a composition bias toward polar residues. Phosphoserine is present on residues S141 and S146. A Phosphotyrosine modification is found at Y148. T151 is modified (phosphothreonine). A Phosphoserine modification is found at S153. A Phosphothreonine modification is found at T154. 2 positions are modified to citrulline; in form C8: R159 and R165. Residue R167 is modified to Citrulline. A Phosphothreonine modification is found at T169. A Phosphoserine modification is found at S174. An omega-N-methylarginine mark is found at R177 and R183. The interval 179–222 (FGGDRGAPKRGSGKDSHHPARTAHYGSLPQKSHGRTQDENPVVH) is induces experimental autoimmune encephalomyelitis (EAE) 1. Residues 180 to 249 (GGDRGAPKRG…GRGLSLSRFS (70 aa)) are disordered. Phosphoserine is present on S190. R199 is subject to Citrulline. Y203 is subject to Phosphotyrosine. A Phosphoserine modification is found at S210. Phosphothreonine is present on residues T214 and T229. Citrulline is present on R231. At T232 the chain carries Phosphothreonine. Q237 carries the post-translational modification Deamidated glutamine. R241 bears the Omega-N-methylarginine; alternate mark. Residue R241 is modified to Symmetric dimethylarginine; alternate. Residues 246–256 (SRFSWGAEGQR) are induces experimental autoimmune encephalomyelitis (EAE) 2. S249 carries the post-translational modification Phosphoserine. Residues R256 and R264 each carry the citrulline; in form C8 modification. Deamidated glutamine is present on Q281. The residue at position 293 (R293) is a Citrulline; in form C8. S295 is subject to Phosphoserine. R296 carries the post-translational modification Citrulline. S299 is subject to Phosphoserine; by UHMK1. Citrulline is present on R303. A Citrulline; in form C8 modification is found at R304.

It belongs to the myelin basic protein family. In terms of assembly, homodimer. Isoform 3 exists as a homodimer. Several charge isomers of MBP; C1 (the most cationic, least modified, and most abundant form), C2, C3, C4, C5, C6, C7, C8-A and C8-B (the least cationic form); are produced as a result of optional PTM, such as phosphorylation, deamidation of glutamine or asparagine, arginine citrullination and methylation. C8-A and C8-B contain each two mass isoforms termed C8-A(H), C8-A(L), C8-B(H) and C8-B(L), (H) standing for higher and (L) for lower molecular weight. C3, C4 and C5 are phosphorylated. The ratio of methylated arginine residues decreases during aging, making the protein more cationic. Post-translationally, the N-terminal alanine is acetylated (isoform 3, isoform 4, isoform 5 and isoform 6). In terms of processing, arg-241 was found to be 6% monomethylated and 60% symmetrically dimethylated. Proteolytically cleaved in B cell lysosomes by cathepsin CTSG which degrades the major immunogenic MBP epitope and prevents the activation of MBP-specific autoreactive T cells. Post-translationally, phosphorylated by TAOK2, VRK2, MAPK11, MAPK12, MAPK14 and MINK1. MBP isoforms are found in both the central and the peripheral nervous system, whereas Golli-MBP isoforms are expressed in fetal thymus, spleen and spinal cord, as well as in cell lines derived from the immune system.

The protein resides in the myelin membrane. The protein localises to the nucleus. In terms of biological role, the classic group of MBP isoforms (isoform 4-isoform 14) are with PLP the most abundant protein components of the myelin membrane in the CNS. They have a role in both its formation and stabilization. The smaller isoforms might have an important role in remyelination of denuded axons in multiple sclerosis. The non-classic group of MBP isoforms (isoform 1-isoform 3/Golli-MBPs) may preferentially have a role in the early developing brain long before myelination, maybe as components of transcriptional complexes, and may also be involved in signaling pathways in T-cells and neural cells. Differential splicing events combined with optional post-translational modifications give a wide spectrum of isomers, with each of them potentially having a specialized function. Induces T-cell proliferation. The sequence is that of Myelin basic protein (MBP) from Homo sapiens (Human).